The following is a 498-amino-acid chain: TORTIFOLIA1-like protein 5 (498 aa).

HEAT repeat units follow at residues 56–93 (ETFS…SHGD), 97–134 (PHLS…NITG), 136–173 (PFSI…AADE), 177–214 (EQLQ…AVGG), and 219–257 (KAVL…VEEE). Positions 296–423 (EGDSTEVSES…SSSQAKSNAE (128 aa)) are disordered. Over residues 300–322 (TEVSESSSSSKSASSGLSATSGK) the composition is skewed to low complexity. Positions 343 to 366 (NDVEPLDRGDTPKDVEQEAVVSKE) are enriched in basic and acidic residues. Residues 390 to 400 (NGSNKSQVVQS) are compositionally biased toward polar residues. Phosphoserine is present on serine 426.

This is TORTIFOLIA1-like protein 5 from Arabidopsis thaliana (Mouse-ear cress).